Reading from the N-terminus, the 187-residue chain is Peptidyl-tRNA hydrolase (187 aa).

TRNA is bound at residue tyrosine 18. Residue histidine 23 is the Proton acceptor of the active site. Phenylalanine 65, asparagine 67, and asparagine 113 together coordinate tRNA.

Belongs to the PTH family. As to quaternary structure, monomer.

It is found in the cytoplasm. It carries out the reaction an N-acyl-L-alpha-aminoacyl-tRNA + H2O = an N-acyl-L-amino acid + a tRNA + H(+). Hydrolyzes ribosome-free peptidyl-tRNAs (with 1 or more amino acids incorporated), which drop off the ribosome during protein synthesis, or as a result of ribosome stalling. Functionally, catalyzes the release of premature peptidyl moieties from peptidyl-tRNA molecules trapped in stalled 50S ribosomal subunits, and thus maintains levels of free tRNAs and 50S ribosomes. The chain is Peptidyl-tRNA hydrolase from Coxiella burnetii (strain RSA 331 / Henzerling II).